Reading from the N-terminus, the 564-residue chain is Dihydroxy-acid dehydratase (564 aa).

Cysteine 55 provides a ligand contact to [2Fe-2S] cluster. Residue aspartate 87 coordinates Mg(2+). Cysteine 128 serves as a coordination point for [2Fe-2S] cluster. Positions 129 and 130 each coordinate Mg(2+). Lysine 130 carries the N6-carboxylysine modification. Cysteine 200 serves as a coordination point for [2Fe-2S] cluster. Glutamate 452 is a binding site for Mg(2+). Residue serine 478 is the Proton acceptor of the active site.

It belongs to the IlvD/Edd family. In terms of assembly, homodimer. Requires [2Fe-2S] cluster as cofactor. Mg(2+) serves as cofactor.

The enzyme catalyses (2R)-2,3-dihydroxy-3-methylbutanoate = 3-methyl-2-oxobutanoate + H2O. It catalyses the reaction (2R,3R)-2,3-dihydroxy-3-methylpentanoate = (S)-3-methyl-2-oxopentanoate + H2O. It participates in amino-acid biosynthesis; L-isoleucine biosynthesis; L-isoleucine from 2-oxobutanoate: step 3/4. Its pathway is amino-acid biosynthesis; L-valine biosynthesis; L-valine from pyruvate: step 3/4. In terms of biological role, functions in the biosynthesis of branched-chain amino acids. Catalyzes the dehydration of (2R,3R)-2,3-dihydroxy-3-methylpentanoate (2,3-dihydroxy-3-methylvalerate) into 2-oxo-3-methylpentanoate (2-oxo-3-methylvalerate) and of (2R)-2,3-dihydroxy-3-methylbutanoate (2,3-dihydroxyisovalerate) into 2-oxo-3-methylbutanoate (2-oxoisovalerate), the penultimate precursor to L-isoleucine and L-valine, respectively. The protein is Dihydroxy-acid dehydratase of Polaromonas sp. (strain JS666 / ATCC BAA-500).